Consider the following 558-residue polypeptide: Receptor-like kinase LIP2 (558 aa).

Positions 1–45 (MHCFPCFSSPKNKKSSTTNETNDNNEPKPDDRRRAEETEEIEQSE) are disordered. Residues 15-24 (SSTTNETNDN) show a composition bias toward low complexity. Residues 25-36 (NEPKPDDRRRAE) show a composition bias toward basic and acidic residues. Position 53 is a phosphothreonine (Thr-53). Residues 64 to 343 (FRQECLLGEG…SDVMVALSFL (280 aa)) form the Protein kinase domain. ATP-binding positions include 70 to 78 (LGEGGFGRV) and Lys-93. Tyr-138 is modified (phosphotyrosine). Asp-191 acts as the Proton acceptor in catalysis. Residues Ser-195 and Ser-227 each carry the phosphoserine modification. Thr-233 bears the Phosphothreonine mark. A Phosphotyrosine modification is found at Tyr-241. Positions 372–558 (HDSNLVSPPP…SDVAIDSIKE (187 aa)) are disordered. Basic and acidic residues predominate over residues 401-418 (ESEKESVSKNEYKKKHEE). Residues 419-431 (EDSSMESDDESDS) show a composition bias toward acidic residues. Residues 432-448 (NSEHEKDQPPKPIDEKN) are compositionally biased toward basic and acidic residues. The segment covering 473 to 486 (SKSSQKSNDESTSS) has biased composition (low complexity). Basic and acidic residues-rich tracts occupy residues 488-500 (YDSD…KGKE), 508-524 (EEKH…KTDD), and 547-558 (IKSDVAIDSIKE).

The protein belongs to the protein kinase superfamily. Ser/Thr protein kinase family. In terms of assembly, interacts with PRK6. In terms of processing, palmitoylated. As to expression, expressed in mature pollen and in germinating pollen tubes.

It is found in the cell membrane. Its function is as follows. Involved in pollen tube guidance into micropyle. Participates in perception of the ovule-secreted peptide signal LURE1. The chain is Receptor-like kinase LIP2 from Arabidopsis thaliana (Mouse-ear cress).